Reading from the N-terminus, the 460-residue chain is MEMYFKRMKDEWTGLVEQADPPIRAKAAEIAVAHAHYLSIEFYRIVRIDPHAEEFLSNEQVERQLKSAMERWIINVLSAQVDDVERLIQIQHTVAEVHARIGIPVEIVEMGFRVLKKILYPVIFSSDYSAAEKLQVYHFSINSIDIAMEVMTRAFTFSDSSASKEDENYRIFSLLENAEEEKERQIASILSWEIDIIYKILLDSDLGSSLPLSQADFGLWFNHKGRHYFSGIAEVGHISRLIQDFDGIFNQTMRNTRNLNNRSLRVKFLLQIRNTVSQIITLLRELFEEVSRHEVGMDVLTKLLNRRFLPTIFKREIAHANRTGTPLSVLIIDVDKFKEINDTWGHNTGDEILRKVSQAFYDNVRSSDYVFRYGGDEFIIVLTEASENETLRTAERIRSRVEKTKLKAANGEDIALSLSIGAAMFNGHPDYERLIQIADEALYIAKRRGRNRVELWKASL.

Residue histidine 98 participates in heme binding. The GGDEF domain maps to 325-458; that stretch reads TPLSVLIIDV…GRNRVELWKA (134 aa). Aspartate 333 contributes to the Mg(2+) binding site. Substrate is bound by residues asparagine 341 and aspartate 350. Position 376 (aspartate 376) interacts with Mg(2+). Catalysis depends on aspartate 376, which acts as the Proton acceptor.

Requires heme as cofactor. The cofactor is Mg(2+).

The enzyme catalyses 2 GTP = 3',3'-c-di-GMP + 2 diphosphate. Its pathway is purine metabolism; 3',5'-cyclic di-GMP biosynthesis. In terms of biological role, globin-coupled heme-based oxygen sensor protein displaying diguanylate cyclase (DGC) activity in response to oxygen availability. Thus, catalyzes the synthesis of cyclic diguanylate (c-di-GMP) via the condensation of 2 GTP molecules. Cyclic-di-GMP is a second messenger which controls cell surface-associated traits in bacteria. The polypeptide is Diguanylate cyclase DosC (dosC) (Escherichia coli O157:H7).